Reading from the N-terminus, the 313-residue chain is Probable GTP 3',8-cyclase (313 aa).

In terms of domain architecture, Radical SAM core spans 4–224 (VYGRELEDLR…EIRNKHKRPR (221 aa)). A GTP-binding site is contributed by Arg-13. Residues Cys-20, Cys-24, and Cys-27 each coordinate [4Fe-4S] cluster. Residue Lys-60 coordinates GTP. Gly-64 contacts S-adenosyl-L-methionine. Thr-90 serves as a coordination point for GTP. Ser-114 provides a ligand contact to S-adenosyl-L-methionine. Lys-151 provides a ligand contact to GTP. [4Fe-4S] cluster-binding residues include Cys-244 and Cys-247. Residue 249–251 (RIR) coordinates GTP. Residue Cys-261 participates in [4Fe-4S] cluster binding.

This sequence belongs to the radical SAM superfamily. MoaA family. [4Fe-4S] cluster is required as a cofactor.

It carries out the reaction GTP + AH2 + S-adenosyl-L-methionine = (8S)-3',8-cyclo-7,8-dihydroguanosine 5'-triphosphate + 5'-deoxyadenosine + L-methionine + A + H(+). Its pathway is cofactor biosynthesis; molybdopterin biosynthesis. Its function is as follows. Catalyzes the cyclization of GTP to (8S)-3',8-cyclo-7,8-dihydroguanosine 5'-triphosphate. This is Probable GTP 3',8-cyclase from Sulfolobus acidocaldarius (strain ATCC 33909 / DSM 639 / JCM 8929 / NBRC 15157 / NCIMB 11770).